Consider the following 306-residue polypeptide: Curved DNA-binding protein (306 aa).

Residues 5-69 (DYYAIMGVKP…QRRAEYDQMW (65 aa)) form the J domain.

It localises to the cytoplasm. It is found in the nucleoid. Its function is as follows. DNA-binding protein that preferentially recognizes a curved DNA sequence. It is probably a functional analog of DnaJ; displays overlapping activities with DnaJ, but functions under different conditions, probably acting as a molecular chaperone in an adaptive response to environmental stresses other than heat shock. Lacks autonomous chaperone activity; binds native substrates and targets them for recognition by DnaK. Its activity is inhibited by the binding of CbpM. The chain is Curved DNA-binding protein from Escherichia coli O7:K1 (strain IAI39 / ExPEC).